Reading from the N-terminus, the 373-residue chain is tRNA N6-adenosine threonylcarbamoyltransferase (373 aa).

His-133, His-137, and Tyr-154 together coordinate a divalent metal cation. Substrate is bound by residues 154-158 (YVSGG), Asp-186, Gly-201, Glu-205, and Asn-302. Position 331 (Asp-331) interacts with a divalent metal cation.

The protein belongs to the KAE1 / TsaD family. As to quaternary structure, component of the EKC/KEOPS complex composed of at least BUD32, CGI121, GON7, KAE1 and PCC1; the whole complex dimerizes. A divalent metal cation serves as cofactor.

It is found in the cytoplasm. The protein resides in the nucleus. The enzyme catalyses L-threonylcarbamoyladenylate + adenosine(37) in tRNA = N(6)-L-threonylcarbamoyladenosine(37) in tRNA + AMP + H(+). In terms of biological role, component of the EKC/KEOPS complex that is required for the formation of a threonylcarbamoyl group on adenosine at position 37 (t(6)A37) in tRNAs that read codons beginning with adenine. The complex is probably involved in the transfer of the threonylcarbamoyl moiety of threonylcarbamoyl-AMP (TC-AMP) to the N6 group of A37. KAE1 likely plays a direct catalytic role in this reaction, but requires other protein(s) of the complex to fulfill this activity. The EKC/KEOPS complex also promotes both telomere uncapping and telomere elongation. The complex is required for efficient recruitment of transcriptional coactivators. This chain is tRNA N6-adenosine threonylcarbamoyltransferase, found in Debaryomyces hansenii (strain ATCC 36239 / CBS 767 / BCRC 21394 / JCM 1990 / NBRC 0083 / IGC 2968) (Yeast).